A 332-amino-acid polypeptide reads, in one-letter code: Ferredoxin--NADP reductase 2 (332 aa).

Residues glutamate 37, glutamine 45, tyrosine 50, valine 90, phenylalanine 124, aspartate 285, and threonine 326 each contribute to the FAD site.

The protein belongs to the ferredoxin--NADP reductase type 2 family. In terms of assembly, homodimer. FAD serves as cofactor.

It carries out the reaction 2 reduced [2Fe-2S]-[ferredoxin] + NADP(+) + H(+) = 2 oxidized [2Fe-2S]-[ferredoxin] + NADPH. This Bacillus licheniformis (strain ATCC 14580 / DSM 13 / JCM 2505 / CCUG 7422 / NBRC 12200 / NCIMB 9375 / NCTC 10341 / NRRL NRS-1264 / Gibson 46) protein is Ferredoxin--NADP reductase 2.